The following is a 416-amino-acid chain: Glutamyl-tRNA reductase (416 aa).

Substrate is bound by residues threonine 49 to arginine 52, serine 105, glutamate 110 to glutamine 112, and glutamine 116. Cysteine 50 functions as the Nucleophile in the catalytic mechanism. An NADP(+)-binding site is contributed by glycine 185–isoleucine 190.

Belongs to the glutamyl-tRNA reductase family. As to quaternary structure, homodimer.

It carries out the reaction (S)-4-amino-5-oxopentanoate + tRNA(Glu) + NADP(+) = L-glutamyl-tRNA(Glu) + NADPH + H(+). The protein operates within porphyrin-containing compound metabolism; protoporphyrin-IX biosynthesis; 5-aminolevulinate from L-glutamyl-tRNA(Glu): step 1/2. In terms of biological role, catalyzes the NADPH-dependent reduction of glutamyl-tRNA(Glu) to glutamate 1-semialdehyde (GSA). This chain is Glutamyl-tRNA reductase, found in Thiobacillus denitrificans (strain ATCC 25259 / T1).